The following is a 314-amino-acid chain: Fibrinogen-like protein 1 (314 aa).

A signal peptide spans Met1–Ala22. Residues Cys28–Val62 adopt a coiled-coil conformation. Residues Leu76–Asp308 enclose the Fibrinogen C-terminal domain. Disulfide bonds link Cys85-Cys114 and Cys250-Cys263.

As to quaternary structure, homodimer. Interacts (via the Fibrinogen C-terminal domain) with LAG3 (via Ig-like domains 1 and 2). Mainly expressed in liver. Also expressed in brown adipose tissue.

Its subcellular location is the secreted. In terms of biological role, immune suppressive molecule that inhibits antigen-specific T-cell activation by acting as a major ligand of LAG3. Responsible for LAG3 T-cell inhibitory function. Binds LAG3 independently from MHC class II (MHC-II). Secreted by, and promotes growth of, hepatocytes. In Mus musculus (Mouse), this protein is Fibrinogen-like protein 1 (Fgl1).